The following is a 390-amino-acid chain: Galactokinase (390 aa).

33–36 (EHTD) serves as a coordination point for substrate. ATP-binding positions include Ser-67 and 124 to 130 (GSGLSSS). Mg(2+) is bound by residues Ser-130 and Glu-162. Catalysis depends on Asp-174, which acts as the Proton acceptor. Position 224 (Tyr-224) interacts with substrate.

Belongs to the GHMP kinase family. GalK subfamily.

It localises to the cytoplasm. It catalyses the reaction alpha-D-galactose + ATP = alpha-D-galactose 1-phosphate + ADP + H(+). Its pathway is carbohydrate metabolism; galactose metabolism. Catalyzes the transfer of the gamma-phosphate of ATP to D-galactose to form alpha-D-galactose-1-phosphate (Gal-1-P). The polypeptide is Galactokinase (Streptococcus suis (strain 05ZYH33)).